Here is a 773-residue protein sequence, read N- to C-terminus: Ergothioneine biosynthesis protein 1 (773 aa).

The interval 16 to 322 (PESIEQSLKR…ESTIADYSTY (307 aa)) is L-histidine N(alpha)-methyltransferase. Tyr51 is a binding site for L-histidine. S-adenosyl-L-methionine is bound by residues Gly85, Lys91, Asp112, and 142–143 (CF). L-histidine is bound by residues Asn172, Tyr212, and 287 to 289 (EES). Residues 347-772 (ALRKVWLFIT…YAWIGARLVK (426 aa)) are hercynylcysteine S-oxide synthase. Residues His382, His476, and His480 each contribute to the Fe cation site.

This sequence in the N-terminal section; belongs to the methyltransferase superfamily. EgtD family. In the C-terminal section; belongs to the EgtB family. The cofactor is Fe(2+).

The protein resides in the cytoplasm. It is found in the nucleus. It carries out the reaction L-histidine + 3 S-adenosyl-L-methionine = hercynine + 3 S-adenosyl-L-homocysteine + 3 H(+). The catalysed reaction is hercynine + L-cysteine + O2 = S-(hercyn-2-yl)-L-cysteine S-oxide + H2O. It participates in amino-acid biosynthesis; ergothioneine biosynthesis. Its function is as follows. Catalyzes the SAM-dependent triple methylation of the alpha-amino group of histidine to form hercynine and subsequent conjugation with cysteine and oxygen to form hercynylcysteine sulfoxide, the first two steps in the biosynthesis pathway of ergothioneine. May play a role in meiosis. The sequence is that of Ergothioneine biosynthesis protein 1 from Schizosaccharomyces pombe (strain 972 / ATCC 24843) (Fission yeast).